Here is a 185-residue protein sequence, read N- to C-terminus: Ribosome-recycling factor (185 aa).

It belongs to the RRF family.

The protein localises to the cytoplasm. Functionally, responsible for the release of ribosomes from messenger RNA at the termination of protein biosynthesis. May increase the efficiency of translation by recycling ribosomes from one round of translation to another. This chain is Ribosome-recycling factor, found in Dehalococcoides mccartyi (strain ATCC BAA-2266 / KCTC 15142 / 195) (Dehalococcoides ethenogenes (strain 195)).